The chain runs to 296 residues: uncharacterized protein (296 aa).

Disordered stretches follow at residues 1–45 (MSAT…LGEN) and 200–296 (EQVV…SESE). The span at 201-220 (QVVDDYPADSDDDTDAESDD) shows a compositional bias: acidic residues. Polar residues predominate over residues 236 to 249 (SSVSSCGSFITDGS). Over residues 250 to 296 (GSEESEDSASDETDDSDFDTDELTSESEEEESESESESESESESESE) the composition is skewed to acidic residues.

This is an uncharacterized protein from Ictaluridae (bullhead catfishes).